The chain runs to 228 residues: Ankyrin repeat domain-containing protein 46 (228 aa).

4 ANK repeats span residues Q11–I40, R44–T74, Q77–I103, and Q107–G138. The helical transmembrane segment at V195 to G215 threads the bilayer.

Its subcellular location is the membrane. The protein is Ankyrin repeat domain-containing protein 46 (Ankrd46) of Rattus norvegicus (Rat).